Here is a 588-residue protein sequence, read N- to C-terminus: Complement component C8 beta chain (588 aa).

A signal peptide spans 1 to 30; the sequence is MFRVAIPRSALNLHSCLLHVTLSLVLISKA. The propeptide occupies 31–46; that stretch reads AITTAGNEDSDVREAR. The region spanning 58–113 is the TSP type-1 1 domain; that stretch reads DCVISDWSAWSRCDTCQKKRYRYAKLDQPSQFGGEPCHFHDMEDEACDVPDRYTCD. Disulfide bonds link cysteine 59-cysteine 94, cysteine 70-cysteine 104, cysteine 73-cysteine 112, cysteine 118-cysteine 129, cysteine 123-cysteine 142, cysteine 136-cysteine 151, and cysteine 158-cysteine 196. Residues tryptophan 64 and tryptophan 67 are each glycosylated (C-linked (Man) tryptophan). Residues 115 to 152 enclose the LDL-receptor class A domain; sequence IPLCEGFLCTQTGRCIHRTLQCNGEDDCGDMSDEVGCK. Residues leucine 134, asparagine 137, glutamate 139, aspartate 141, aspartate 147, and glutamate 148 each coordinate Ca(2+). The MACPF domain occupies 154–500; it reads VPKPCRQEAE…EYLAESSSCR (347 aa). The next 4 membrane-spanning stretches (beta stranded) occupy residues 248–255, 258–265, 375–382, and 388–395; these read TIVSIGFA, GIAEFGFN, TQAGLKIG, and VYVSAGIE. 5 disulfide bridges follow: cysteine 374–cysteine 399, cysteine 499–cysteine 547, cysteine 501–cysteine 517, cysteine 504–cysteine 519, and cysteine 521–cysteine 530. Positions 501 to 531 constitute an EGF-like domain; sequence CAPCHNNGVAVLRGTRCDCVCPTGYTGRGCE. The region spanning 542 to 588 is the TSP type-1 2 domain; sequence DGSWSCWGAWSSCSGRKMSRSRQCNNPVPSDGGLACRGLQQESTDCF. Residues tryptophan 548 and tryptophan 551 are each glycosylated (C-linked (Man) tryptophan). Cysteine 554 and cysteine 587 are joined by a disulfide.

This sequence belongs to the complement C6/C7/C8/C9 family. Heterotrimer of 3 chains: alpha (C8A), beta (C8B) and gamma (C8G); the alpha and gamma chains are disulfide bonded. Component of the membrane attack complex (MAC), composed of complement C5b, C6, C7, C8A, C8B, C8G and multiple copies of the pore-forming subunit C9.

It is found in the secreted. It localises to the target cell membrane. In terms of biological role, component of the membrane attack complex (MAC), a multiprotein complex activated by the complement cascade, which inserts into a target cell membrane and forms a pore, leading to target cell membrane rupture and cell lysis. The MAC is initiated by proteolytic cleavage of C5 into complement C5b in response to the classical, alternative, lectin and GZMK complement pathways. The complement pathways consist in a cascade of proteins that leads to phagocytosis and breakdown of pathogens and signaling that strengthens the adaptive immune system. C8B, together with C8A and C8G, inserts into the target membrane, but does not form pores by itself. During MAC assembly, associates with C5b, C6 and C7 to form the C5b8 intermediate complex that inserts into the target membrane and traverses the bilayer increasing membrane rigidity. This chain is Complement component C8 beta chain (c8b), found in Paralichthys olivaceus (Bastard halibut).